A 264-amino-acid polypeptide reads, in one-letter code: Tryptophan synthase alpha chain (264 aa).

Active-site proton acceptor residues include Glu45 and Asp56.

This sequence belongs to the TrpA family. In terms of assembly, tetramer of two alpha and two beta chains.

It catalyses the reaction (1S,2R)-1-C-(indol-3-yl)glycerol 3-phosphate + L-serine = D-glyceraldehyde 3-phosphate + L-tryptophan + H2O. It participates in amino-acid biosynthesis; L-tryptophan biosynthesis; L-tryptophan from chorismate: step 5/5. Its function is as follows. The alpha subunit is responsible for the aldol cleavage of indoleglycerol phosphate to indole and glyceraldehyde 3-phosphate. The polypeptide is Tryptophan synthase alpha chain (Leptospira borgpetersenii serovar Hardjo-bovis (strain JB197)).